The primary structure comprises 300 residues: Protoheme IX farnesyltransferase 1 (300 aa).

9 consecutive transmembrane segments (helical) span residues 28–48 (VVAL…PTIL), 54–74 (VAGL…NHLI), 100–120 (ALLF…VFTN), 122–142 (LTAW…TAYL), 149–169 (NIVI…TAVT), 176–196 (ALLL…ALAI), 222–242 (CILL…LVGM), 243–263 (SGPL…YKAW), and 280–300 (FSIY…YLWA).

It belongs to the UbiA prenyltransferase family. Protoheme IX farnesyltransferase subfamily.

It localises to the cell inner membrane. It carries out the reaction heme b + (2E,6E)-farnesyl diphosphate + H2O = Fe(II)-heme o + diphosphate. The protein operates within porphyrin-containing compound metabolism; heme O biosynthesis; heme O from protoheme: step 1/1. Its function is as follows. Converts heme B (protoheme IX) to heme O by substitution of the vinyl group on carbon 2 of heme B porphyrin ring with a hydroxyethyl farnesyl side group. The polypeptide is Protoheme IX farnesyltransferase 1 (Shewanella sp. (strain MR-4)).